Reading from the N-terminus, the 1382-residue chain is Insulin receptor (1382 aa).

The N-terminal stretch at 1 to 27 is a signal peptide; the sequence is MATGGRRGAAAAPLLVAVAALLLGAAG. Extracellular segments lie at residues 28-758 and 763-956; these read HLYP…PRPS and SLGD…NIAK. A disulfide bond links Cys-35 and Cys-53. Asn-43, Asn-52, Asn-105, and Asn-138 each carry an N-linked (GlcNAc...) asparagine glycan. 9 disulfide bridges follow: Cys-153/Cys-182, Cys-186/Cys-209, Cys-196/Cys-215, Cys-219/Cys-228, Cys-223/Cys-234, Cys-235/Cys-243, Cys-239/Cys-252, Cys-255/Cys-264, and Cys-268/Cys-280. A glycan (N-linked (GlcNAc...) asparagine) is linked at Asn-242. Asn-282 carries an N-linked (GlcNAc...) asparagine glycan. Disulfide bonds link Cys-286/Cys-311, Cys-293/Cys-301, Cys-315/Cys-328, Cys-331/Cys-335, and Cys-339/Cys-360. The N-linked (GlcNAc...) asparagine glycan is linked to Asn-322. N-linked (GlcNAc...) asparagine glycosylation occurs at Asn-364. Ser-400 is subject to Phosphoserine. Position 401 is a phosphotyrosine (Tyr-401). Ser-407 bears the Phosphoserine mark. N-linked (GlcNAc...) asparagine glycosylation is found at Asn-424 and Asn-445. A disulfide bond links Cys-462 and Cys-495. Residues Asn-541, Asn-633, Asn-651, and Asn-698 are each glycosylated (N-linked (GlcNAc...) asparagine). The region spanning 624–726 is the Fibronectin type-III 1 domain; that stretch reads VPLDPISVSN…SQILKELEES (103 aa). Intrachain disulfides connect Cys-674-Cys-899 and Cys-825-Cys-834. The interval 686 to 708 is disordered; sequence SPPFESEDSQKHNQSEYEDSAGE. An insulin-binding region spans residues 733-741; it reads EDYLHNVVF. Residues 746 to 766 form a disordered region; that stretch reads TSSGTGAEDPRPSRKRRSLGD. 2 Fibronectin type-III domains span residues 757–842 and 853–947; these read PSRK…YVSA and IVGP…VTDY. N-linked (GlcNAc...) asparagine glycans are attached at residues Asn-769 and Asn-782. N-linked (GlcNAc...) asparagine glycans are attached at residues Asn-920 and Asn-933. A helical membrane pass occupies residues 957 to 979; that stretch reads IIIGPLIFVFLFSVVIGSIYLFL. At 980–1382 the chain is on the cytoplasmic side; it reads RKRQPDGPLG…ILTLPRSNPS (403 aa). Residues Tyr-992, Tyr-999, and Tyr-1011 each carry the phosphotyrosine; by autocatalysis modification. Residue Tyr-999 is a region of interest, important for interaction with IRS1, SHC1 and STAT5B. The region spanning 1023 to 1298 is the Protein kinase domain; sequence ITLLRELGQG…LLKDDLHPSF (276 aa). ATP is bound by residues Ser-1033 and Lys-1057. Residue Lys-1079 forms a Glycyl lysine isopeptide (Lys-Gly) (interchain with G-Cter in ubiquitin) linkage. An S-nitrosocysteine modification is found at Cys-1083. 1104–1110 lines the ATP pocket; it reads ELMAHGD. Residue Asp-1159 is the Proton donor/acceptor of the active site. Residues 1163–1164 and Asp-1177 contribute to the ATP site; that span reads RN. Phosphotyrosine; by autocatalysis is present on residues Tyr-1185, Tyr-1189, Tyr-1190, Tyr-1355, and Tyr-1361. The disordered stretch occupies residues 1360 to 1382; that stretch reads PYTHMNGGKKNGRILTLPRSNPS. Residues 1361–1364 form a PIK3R1-binding region; sequence YTHM.

It belongs to the protein kinase superfamily. Tyr protein kinase family. Insulin receptor subfamily. Tetramer of 2 alpha and 2 beta chains linked by disulfide bonds. The alpha chains carry the insulin-binding regions, while the beta chains carry the kinase domain. Forms a hybrid receptor with IGF1R, the hybrid is a tetramer consisting of 1 alpha chain and 1 beta chain of INSR and 1 alpha chain and 1 beta chain of IGF1R. Interacts with SORBS1 but dissociates from it following insulin stimulation. Binds SH2B2. Activated form of INSR interacts (via Tyr-999) with the PTB/PID domains of IRS1 and SHC1. The sequences surrounding the phosphorylated NPXY motif contribute differentially to either IRS1 or SHC1 recognition. Interacts (via tyrosines in the C-terminus) with IRS2 (via PTB domain and 591-786 AA); the 591-786 would be the primary anchor of IRS2 to INSR while the PTB domain would have a stabilizing action on the interaction with INSR. Interacts with the SH2 domains of the 85 kDa regulatory subunit of PI3K (PIK3R1) in vitro, when autophosphorylated on tyrosine residues. Interacts with SOCS7. Interacts (via the phosphorylated Tyr-999), with SOCS3. Interacts (via the phosphorylated Tyr-1185, Tyr-1189, Tyr-1190) with SOCS1. Interacts with CAV2 (tyrosine-phosphorylated form); the interaction is increased with 'Tyr-27'phosphorylation of CAV2. Interacts with ARRB2. Interacts with GRB10; this interaction blocks the association between IRS1/IRS2 and INSR, significantly reduces insulin-stimulated tyrosine phosphorylation of IRS1 and IRS2 and thus decreases insulin signaling. Interacts with GRB7. Interacts with PDPK1. Interacts (via Tyr-1190) with GRB14 (via BPS domain); this interaction protects the tyrosines in the activation loop from dephosphorylation, but promotes dephosphorylation of Tyr-999, this results in decreased interaction with, and phosphorylation of, IRS1. Interacts (via subunit alpha) with ENPP1 (via 485-599 AA); this interaction blocks autophosphorylation. Interacts with PTPRE; this interaction is dependent of Tyr-1185, Tyr-1189 and Tyr-1190 of the INSR. Interacts with STAT5B (via SH2 domain). Interacts with PTPRF. Interacts with ATIC; ATIC together with PRKAA2/AMPK2 and HACD3/PTPLAD1 is proposed to be part of a signaling netwok regulating INSR autophosphorylation and endocytosis. Interacts with the cone snail venom insulin Con-Ins G1. Interacts with the insulin receptor SORL1; this interaction strongly increases its surface exposure, hence strengthens insulin signal reception. Interacts (tyrosine phosphorylated) with CCDC88A/GIV (via SH2-like region); binding requires autophosphorylation of the INSR C-terminal region. Interacts with GNAI3; the interaction is probably mediated by CCDC88A/GIV. Interacts with LMBRD1. Interacts (in response to insulin stimulation) with NCK1; this interaction may recruit PTPN1 to mediate INSR dephosphorylation. Interacts with CD248; this interaction diminishes INSR autophosphorylation. After being transported from the endoplasmic reticulum to the Golgi apparatus, the single glycosylated precursor is further glycosylated and then cleaved, followed by its transport to the plasma membrane. In terms of processing, autophosphorylated on tyrosine residues in response to insulin. Phosphorylation of Tyr-999 is required for binding to IRS1, SHC1 and STAT5B. Dephosphorylated by PTPRE at Tyr-999, Tyr-1185, Tyr-1189 and Tyr-1190. May also be phosphorylated at Tyr-1185 and Tyr-1190 by mTORC2. Dephosphorylated by PTPRF and PTPN1. Dephosphorylated by PTPN2; down-regulates insulin-induced signaling. Dephosphorylation at Tyr-1189 and Tyr-1190 requires the SH2/SH3 adapter protein NCK1, probably to recruit its interaction partner PTPN1. Post-translationally, S-nitrosylation at Cys-1083 by BLVRB inhibits the receptor tyrosine kinase, thereby inhibiting insulin signaling. Ubiquitinated by MARCHF1; leading to degradation thereby reducing surface INSR expression. In terms of tissue distribution, isoform Long and isoform Short are predominantly expressed in tissue targets of insulin metabolic effects: liver, adipose tissue and skeletal muscle but are also expressed in the peripheral nerve, kidney, pulmonary alveoli, pancreatic acini, placenta vascular endothelium, fibroblasts, monocytes, granulocytes, erythrocytes and skin. Isoform Short is preferentially expressed in fetal cells such as fetal fibroblasts, muscle, liver and kidney. Found as a hybrid receptor with IGF1R in muscle, heart, kidney, adipose tissue, skeletal muscle, hepatoma, fibroblasts, spleen and placenta (at protein level). Overexpressed in several tumors, including breast, colon, lung, ovary, and thyroid carcinomas.

The protein resides in the cell membrane. The protein localises to the late endosome. It is found in the lysosome. The enzyme catalyses L-tyrosyl-[protein] + ATP = O-phospho-L-tyrosyl-[protein] + ADP + H(+). Its activity is regulated as follows. Activated in response to insulin. Autophosphorylation activates the kinase activity. PTPN1, PTPRE and PTPRF dephosphorylate important tyrosine residues, thereby reducing INSR activity. Inhibited by ENPP1. GRB10 and GRB14 inhibit the catalytic activity of the INSR, they block access of substrates to the activated receptor. SOCS1 and SOCS3 act as negative regulators of INSR activity, they bind to the activated INRS and interfere with the phosphorylation of INSR substrates. Receptor tyrosine kinase which mediates the pleiotropic actions of insulin. Binding of insulin leads to phosphorylation of several intracellular substrates, including, insulin receptor substrates (IRS1, 2, 3, 4), SHC, GAB1, CBL and other signaling intermediates. Each of these phosphorylated proteins serve as docking proteins for other signaling proteins that contain Src-homology-2 domains (SH2 domain) that specifically recognize different phosphotyrosine residues, including the p85 regulatory subunit of PI3K and SHP2. Phosphorylation of IRSs proteins lead to the activation of two main signaling pathways: the PI3K-AKT/PKB pathway, which is responsible for most of the metabolic actions of insulin, and the Ras-MAPK pathway, which regulates expression of some genes and cooperates with the PI3K pathway to control cell growth and differentiation. Binding of the SH2 domains of PI3K to phosphotyrosines on IRS1 leads to the activation of PI3K and the generation of phosphatidylinositol-(3, 4, 5)-triphosphate (PIP3), a lipid second messenger, which activates several PIP3-dependent serine/threonine kinases, such as PDPK1 and subsequently AKT/PKB. The net effect of this pathway is to produce a translocation of the glucose transporter SLC2A4/GLUT4 from cytoplasmic vesicles to the cell membrane to facilitate glucose transport. Moreover, upon insulin stimulation, activated AKT/PKB is responsible for: anti-apoptotic effect of insulin by inducing phosphorylation of BAD; regulates the expression of gluconeogenic and lipogenic enzymes by controlling the activity of the winged helix or forkhead (FOX) class of transcription factors. Another pathway regulated by PI3K-AKT/PKB activation is mTORC1 signaling pathway which regulates cell growth and metabolism and integrates signals from insulin. AKT mediates insulin-stimulated protein synthesis by phosphorylating TSC2 thereby activating mTORC1 pathway. The Ras/RAF/MAP2K/MAPK pathway is mainly involved in mediating cell growth, survival and cellular differentiation of insulin. Phosphorylated IRS1 recruits GRB2/SOS complex, which triggers the activation of the Ras/RAF/MAP2K/MAPK pathway. In addition to binding insulin, the insulin receptor can bind insulin-like growth factors (IGFI and IGFII). Isoform Short has a higher affinity for IGFII binding. When present in a hybrid receptor with IGF1R, binds IGF1. PubMed:12138094 shows that hybrid receptors composed of IGF1R and INSR isoform Long are activated with a high affinity by IGF1, with low affinity by IGF2 and not significantly activated by insulin, and that hybrid receptors composed of IGF1R and INSR isoform Short are activated by IGF1, IGF2 and insulin. In contrast, PubMed:16831875 shows that hybrid receptors composed of IGF1R and INSR isoform Long and hybrid receptors composed of IGF1R and INSR isoform Short have similar binding characteristics, both bind IGF1 and have a low affinity for insulin. In adipocytes, inhibits lipolysis. The polypeptide is Insulin receptor (INSR) (Homo sapiens (Human)).